The sequence spans 1068 residues: Focal adhesion kinase 1 (1068 aa).

The interval Met-1–Met-26 is disordered. Over residues Leu-10–Ser-23 the composition is skewed to polar residues. Residues Arg-35–Ser-355 enclose the FERM domain. Phosphotyrosine is present on residues Tyr-403 and Tyr-413. Positions Ile-435 to Leu-693 constitute a Protein kinase domain. Residues Ile-441–Gly-447, Lys-467, and Glu-513–Cys-515 contribute to the ATP site. The active-site Proton acceptor is Asp-559. A phosphotyrosine; by autocatalysis mark is found at Tyr-589 and Tyr-590. Over residues Gln-699–Arg-710 the composition is skewed to basic and acidic residues. Disordered regions lie at residues Gln-699–Met-750 and Gly-869–Asn-912. A phosphotyrosine mark is found at Tyr-874 and Tyr-941.

It belongs to the protein kinase superfamily. Tyr protein kinase family. FAK subfamily. Post-translationally, phosphorylated on tyrosine residues; phosphorylated kinase is first detected during gastrulation, suggesting that tyrosine phosphorylation is developmentally regulated.

It is found in the cell junction. The protein resides in the focal adhesion. The protein localises to the cell membrane. It localises to the cytoplasm. Its subcellular location is the cytoskeleton. It is found in the cilium basal body. It carries out the reaction L-tyrosyl-[protein] + ATP = O-phospho-L-tyrosyl-[protein] + ADP + H(+). In terms of biological role, non-receptor protein-tyrosine kinase implicated in signaling pathways involved in cell motility, proliferation and apoptosis. Activated by tyrosine-phosphorylation in response to either integrin clustering induced by cell adhesion or antibody cross-linking, or via G-protein coupled receptor (GPCR) occupancy by ligands such as bombesin or lysophosphatidic acid, or via LDL receptor occupancy. Microtubule-induced dephosphorylation at Tyr-397 is crucial for the induction of focal adhesion disassembly. The sequence is that of Focal adhesion kinase 1 (ptk2) from Xenopus laevis (African clawed frog).